The chain runs to 256 residues: Tryptophan synthase alpha chain (256 aa).

Catalysis depends on proton acceptor residues glutamate 45 and aspartate 56.

Belongs to the TrpA family. Tetramer of two alpha and two beta chains.

The enzyme catalyses (1S,2R)-1-C-(indol-3-yl)glycerol 3-phosphate + L-serine = D-glyceraldehyde 3-phosphate + L-tryptophan + H2O. It participates in amino-acid biosynthesis; L-tryptophan biosynthesis; L-tryptophan from chorismate: step 5/5. In terms of biological role, the alpha subunit is responsible for the aldol cleavage of indoleglycerol phosphate to indole and glyceraldehyde 3-phosphate. This Christiangramia forsetii (strain DSM 17595 / CGMCC 1.15422 / KT0803) (Gramella forsetii) protein is Tryptophan synthase alpha chain.